Here is a 447-residue protein sequence, read N- to C-terminus: Putative bacteriocin-SkfA transport system permease protein SkfF (447 aa).

Residues 1-3 (MPF) lie on the Cytoplasmic side of the membrane. A helical transmembrane segment spans residues 4 to 22 (LIMLLFVGAIGFQVSFVSR). Residues 23–29 (STTWDMS) lie on the Extracellular side of the membrane. Residues 30–50 (IAGWVLTGVFILYTAFGLFSN) form a helical membrane-spanning segment. Residues 51–59 (RLPSQMADI) are Cytoplasmic-facing. The chain crosses the membrane as a helical span at residues 60–80 (IWLYGTATSFSKVVYSVLFFS). The Extracellular portion of the chain corresponds to 81 to 85 (VTWKA). A helical membrane pass occupies residues 86–104 (LLWIISAIFGDVLIVLLSG). The Cytoplasmic portion of the chain corresponds to 105 to 113 (DHINLLGRS). The helical transmembrane segment at 114–134 (IIFVGLFFIAEVWLMSVSCAR) threads the bilayer. The Extracellular segment spans residues 135 to 141 (TVKKMKR). Residues 142 to 160 (VYVLVFLLMLGIYSICLYR) form a helical membrane-spanning segment. Residues 161-189 (FFFLQHSSGIWESIARFISGVGLVFDTLS) lie on the Cytoplasmic side of the membrane. Residues 190–208 (PLYVVVFIGIITVSFMTIA) traverse the membrane as a helical segment. Over 209–247 (FTSRQVEMKESLVKEAEFWEEFQERQFGSGQIIQKPKTT) the chain is Extracellular. The helical transmembrane segment at 248–268 (WWGLQGLNGIWSFLWLELLLF) threads the bilayer. Over 269-297 (KKYLFFHSIHTVMLSGVFYVVIFMYPEWF) the chain is Cytoplasmic. Residues 298–318 (YLLFFLIVSAVMLSSYYSGIV) form a helical membrane-spanning segment. The Extracellular segment spans residues 319-341 (RHSQSGTLHLFPGALWKKIIILE). Residues 342-360 (LTNTVWLYILYCVSITFMA) traverse the membrane as a helical segment. Over 361 to 363 (VGN) the chain is Cytoplasmic. Residues 364 to 382 (LVYWYIYGLGIYIWFMTIR) form a helical membrane-spanning segment. The Extracellular portion of the chain corresponds to 383–404 (LFAFTHTNRNDIKLSLPQYYKS). The chain crosses the membrane as a helical span at residues 405–423 (FFMALGLSGICLYVIHLLT). Residues 424-426 (ADW) lie on the Cytoplasmic side of the membrane. Residues 427–447 (YTLVVVVCIGSLSWCLFYRFR) form a helical membrane-spanning segment.

It localises to the cell membrane. Functionally, probably part of the ABC transporter SkfEF involved in the export of the bacteriocin SKF. Probably responsible for the translocation of bacteriocin SkfA across the membrane. The chain is Putative bacteriocin-SkfA transport system permease protein SkfF from Bacillus subtilis (strain 168).